Here is a 605-residue protein sequence, read N- to C-terminus: Cell wall integrity and stress response component 4 (605 aa).

The signal sequence occupies residues 1–26 (MQTSMVSAKVSIWLVCSVICSSLVRA). One can recognise a WSC domain in the interval 27 to 110 (TQSVCSSQNT…DKDLFGYIYL (84 aa)). Residues 151–305 (SPTLTSTSTT…PSSTTVTYTS (155 aa)) are disordered. N-linked (GlcNAc...) asparagine glycans are attached at residues N340, N386, N389, and N398. Positions 381–399 (RITNNNNSNTTNSNTPTNK) are enriched in low complexity. Positions 381–404 (RITNNNNSNTTNSNTPTNKSTEKK) are disordered. A helical membrane pass occupies residues 415–435 (ATFVVVGVVCLVIICILIYLI). N-linked (GlcNAc...) asparagine glycosylation occurs at N479. The interval 494-521 (GQIMSESPSPRQSTYSLTAGSPPNDPST) is disordered. Over residues 497–521 (MSESPSPRQSTYSLTAGSPPNDPST) the composition is skewed to polar residues. N-linked (GlcNAc...) asparagine glycans are attached at residues N553 and N583.

It is found in the membrane. In Saccharomyces cerevisiae (strain ATCC 204508 / S288c) (Baker's yeast), this protein is Cell wall integrity and stress response component 4 (WSC4).